A 422-amino-acid polypeptide reads, in one-letter code: L-threonine dehydratase biosynthetic IlvA (422 aa).

Lys-56 carries the N6-(pyridoxal phosphate)lysine modification. Residues Asn-83, 189-193 (GGGGL), and Ser-315 each bind pyridoxal 5'-phosphate. The 75-residue stretch at 339–413 (HYFILNFPQR…FDKSNIYINE (75 aa)) folds into the ACT-like domain.

It belongs to the serine/threonine dehydratase family. In terms of assembly, homotetramer. Pyridoxal 5'-phosphate serves as cofactor.

It catalyses the reaction L-threonine = 2-oxobutanoate + NH4(+). It participates in amino-acid biosynthesis; L-isoleucine biosynthesis; 2-oxobutanoate from L-threonine: step 1/1. Catalyzes the anaerobic formation of alpha-ketobutyrate and ammonia from threonine in a two-step reaction. The first step involved a dehydration of threonine and a production of enamine intermediates (aminocrotonate), which tautomerizes to its imine form (iminobutyrate). Both intermediates are unstable and short-lived. The second step is the nonenzymatic hydrolysis of the enamine/imine intermediates to form 2-ketobutyrate and free ammonia. In the low water environment of the cell, the second step is accelerated by RidA. This is L-threonine dehydratase biosynthetic IlvA (ilvA) from Staphylococcus saprophyticus subsp. saprophyticus (strain ATCC 15305 / DSM 20229 / NCIMB 8711 / NCTC 7292 / S-41).